Reading from the N-terminus, the 129-residue chain is Follitropin subunit beta (129 aa).

The first 18 residues, Met-1 to Cys-18, serve as a signal peptide directing secretion. Intrachain disulfides connect Cys-21-Cys-69, Cys-35-Cys-84, Cys-38-Cys-122, Cys-46-Cys-100, Cys-50-Cys-102, and Cys-105-Cys-112. N-linked (GlcNAc...) asparagine glycans are attached at residues Asn-25 and Asn-42.

Belongs to the glycoprotein hormones subunit beta family. As to quaternary structure, heterodimer. The active follitropin is a heterodimer composed of an alpha chain/CGA shared with other hormones and a unique beta chain/FSHB shown here.

The protein resides in the secreted. Functionally, together with the alpha chain CGA constitutes follitropin, the follicle-stimulating hormone, and provides its biological specificity to the hormone heterodimer. Binds FSHR, a G protein-coupled receptor, on target cells to activate downstream signaling pathways. Follitropin is involved in follicle development and spermatogenesis in reproductive organs. This Meriones unguiculatus (Mongolian jird) protein is Follitropin subunit beta (FSHB).